The following is a 100-amino-acid chain: Urease subunit gamma (100 aa).

Belongs to the urease gamma subunit family. As to quaternary structure, heterotrimer of UreA (gamma), UreB (beta) and UreC (alpha) subunits. Three heterotrimers associate to form the active enzyme.

It localises to the cytoplasm. It catalyses the reaction urea + 2 H2O + H(+) = hydrogencarbonate + 2 NH4(+). It functions in the pathway nitrogen metabolism; urea degradation; CO(2) and NH(3) from urea (urease route): step 1/1. This chain is Urease subunit gamma, found in Prochlorococcus marinus (strain MIT 9313).